The following is a 570-amino-acid chain: Phosphoenolpyruvate-protein phosphotransferase (570 aa).

Residue histidine 189 is the Tele-phosphohistidine intermediate of the active site. Arginine 296 and arginine 332 together coordinate phosphoenolpyruvate. The Mg(2+) site is built by glutamate 431 and aspartate 455. Phosphoenolpyruvate is bound by residues 454 to 455 (ND) and arginine 465. Cysteine 502 serves as the catalytic Proton donor.

Belongs to the PEP-utilizing enzyme family. Homodimer. Mg(2+) serves as cofactor.

The protein resides in the cytoplasm. The catalysed reaction is L-histidyl-[protein] + phosphoenolpyruvate = N(pros)-phospho-L-histidyl-[protein] + pyruvate. In terms of biological role, general (non sugar-specific) component of the phosphoenolpyruvate-dependent sugar phosphotransferase system (sugar PTS). This major carbohydrate active-transport system catalyzes the phosphorylation of incoming sugar substrates concomitantly with their translocation across the cell membrane. Enzyme I transfers the phosphoryl group from phosphoenolpyruvate (PEP) to the phosphoryl carrier protein (HPr). The polypeptide is Phosphoenolpyruvate-protein phosphotransferase (ptsI) (Buchnera aphidicola subsp. Schizaphis graminum (strain Sg)).